The sequence spans 276 residues: Cruxhalorhodopsin-3 (276 aa).

The propeptide occupies 1 to 21; the sequence is MPAASTAATTLLQASQSEVLG. Residues 22-25 lie on the Extracellular side of the membrane; that stretch reads EIQS. Residues 26–51 traverse the membrane as a helical segment; sequence NFLLNSSLWVNIALAGVVILLFVAMG. Over 52–57 the chain is Cytoplasmic; it reads RELESS. A helical membrane pass occupies residues 58–81; that stretch reads RAKLIWVATMLVPLVSISSYAGLA. Topologically, residues 82 to 105 are extracellular; the sequence is SGLTVGFLQMPPGHALAGQEVLSP. The helical transmembrane segment at 106-127 threads the bilayer; it reads WGRYLTWTFSTPMILLALGLLA. The Cytoplasmic segment spans residues 128–130; that stretch reads DTD. A helical membrane pass occupies residues 131–154; it reads MASLFTAITMDIGMCITGLAAALV. Topologically, residues 155-157 are extracellular; sequence TSS. The helical transmembrane segment at 158-180 threads the bilayer; it reads HLLRWVFYGISCAFFIAVLYVLL. At 181 to 192 the chain is on the cytoplasmic side; it reads VEWPADAEAAGT. The chain crosses the membrane as a helical span at residues 193–216; sequence SEIFGTLKLLTVVLWLGYPILWAL. At 217–225 the chain is on the extracellular side; that stretch reads GSEGVALLS. Residues 226–254 traverse the membrane as a helical segment; sequence VGVTSWGYSGLDILAKYVFAFLLLRWVAA. At Lys-241 the chain carries N6-(retinylidene)lysine. At 255–276 the chain is on the cytoplasmic side; the sequence is NEDTVTQAGMSLGSGGAAPADD.

The protein belongs to the archaeal/bacterial/fungal opsin family.

The protein localises to the cell membrane. Functionally, light-driven chloride pump. This chain is Cruxhalorhodopsin-3 (choP3), found in Haloarcula vallismortis (Halobacterium vallismortis).